A 320-amino-acid chain; its full sequence is Thiamine thiazole synthase (320 aa).

Residues C82, 103-104 (EA), G111, and V176 each bind substrate. Position 209 is a 2,3-didehydroalanine (Cys) (C209). Substrate is bound by residues D211, H226, M278, and 288-290 (RMG).

It belongs to the THI4 family. In terms of assembly, homooctamer. Requires Fe cation as cofactor. During the catalytic reaction, a sulfide is transferred from Cys-209 to a reaction intermediate, generating a dehydroalanine residue.

It is found in the cytoplasm. Its subcellular location is the nucleus. The enzyme catalyses [ADP-thiazole synthase]-L-cysteine + glycine + NAD(+) = [ADP-thiazole synthase]-dehydroalanine + ADP-5-ethyl-4-methylthiazole-2-carboxylate + nicotinamide + 3 H2O + 2 H(+). Its function is as follows. Involved in biosynthesis of the thiamine precursor thiazole. Catalyzes the conversion of NAD and glycine to adenosine diphosphate 5-(2-hydroxyethyl)-4-methylthiazole-2-carboxylic acid (ADT), an adenylated thiazole intermediate. The reaction includes an iron-dependent sulfide transfer from a conserved cysteine residue of the protein to a thiazole intermediate. The enzyme can only undergo a single turnover, which suggests it is a suicide enzyme. May have additional roles in adaptation to various stress conditions and in DNA damage tolerance. This Fusarium oxysporum f. sp. lycopersici (strain 4287 / CBS 123668 / FGSC 9935 / NRRL 34936) (Fusarium vascular wilt of tomato) protein is Thiamine thiazole synthase (sti35).